A 685-amino-acid chain; its full sequence is Heat shock protein homolog SSE1 (685 aa).

The disordered stretch occupies residues 651-685 (QALRSNQEASKMADLSAKLAAQRKAEAEAKENAKE). Residues 673 to 685 (RKAEAEAKENAKE) are compositionally biased toward basic and acidic residues.

The protein belongs to the heat shock protein 70 family.

Its subcellular location is the cytoplasm. The sequence is that of Heat shock protein homolog SSE1 (SSE1) from Naumovozyma castellii (Yeast).